A 159-amino-acid polypeptide reads, in one-letter code: MASVPHFTVFLFLACALGIGANVTRRATSSCPKGWTHHGSRCFTFHRGSMDWASAEAACIRKGGNLASIHNRREQNFITHLIHKLSGENRRTWIGGNDAVKEGMWFWSDGSKFNYKGWKKGQPDKHVPAEHCAETNFKGAFWNNALCKVKRSFLCAKNL.

Positions 1–21 (MASVPHFTVFLFLACALGIGA) are cleaved as a signal peptide. A propeptide spanning residues 22–24 (NVT) is cleaved from the precursor. 3 disulfide bridges follow: Cys31–Cys42, Cys59–Cys155, and Cys132–Cys147. The region spanning 38–156 (HGSRCFTFHR…CKVKRSFLCA (119 aa)) is the C-type lectin domain. Ca(2+)-binding residues include Gln122, Asp124, Glu130, and Asn143. The Galactose-binding motif lies at 122–124 (QPD).

As to quaternary structure, monomer. In terms of processing, not glycosylated. As to expression, expressed by the venom gland.

It localises to the secreted. Its function is as follows. Galactose specific lectin that exhibits hemagglutination activity (minimum hemagluttination concentration = 2.5 ug/well) in a calcium-independent fashion. Has remarkable pro-inflammatory activity, inducing neutrophil mobilization in mice. Plays a crucial role in the innate immune system and chronic manifestations, especially in neutrophil mobilization. In Thalassophryne nattereri (Copper Joe toadfish), this protein is Galactose-specific lectin nattectin.